We begin with the raw amino-acid sequence, 113 residues long: MSASVLSVISRFLEEYLSATPQRLKLLDAYLLYILLTGALQFGYCLLVGTFPFNSFLSGFISCVGSFILAVCLRIQINPQNKADFQGISPERAFADFLFASTILHLVVMNFVG.

Serine 2 bears the N-acetylserine mark. Residues 2–30 (SASVLSVISRFLEEYLSATPQRLKLLDAY) are Cytoplasmic-facing. A helical membrane pass occupies residues 31–51 (LLYILLTGALQFGYCLLVGTF). A topological domain (lumenal) is located at residue proline 52. Residues 53–73 (FNSFLSGFISCVGSFILAVCL) traverse the membrane as a helical segment. Residues 74-92 (RIQINPQNKADFQGISPER) lie on the Cytoplasmic side of the membrane. A helical membrane pass occupies residues 93–113 (AFADFLFASTILHLVVMNFVG).

This sequence belongs to the DAD/OST2 family. In terms of assembly, component of the oligosaccharyltransferase (OST) complex. OST exists in two different complex forms which contain common core subunits RPN1, RPN2, OST48, OST4, DAD1 and TMEM258, either STT3A or STT3B as catalytic subunits, and form-specific accessory subunits. STT3A complex assembly occurs through the formation of 3 subcomplexes. Subcomplex 1 contains RPN1 and TMEM258, subcomplex 2 contains the STT3A-specific subunits STT3A, DC2/OSTC, and KCP2 as well as the core subunit OST4, and subcomplex 3 contains RPN2, DAD1, and OST48. The STT3A complex can form stable complexes with the Sec61 complex or with both the Sec61 and TRAP complexes.

The protein localises to the endoplasmic reticulum membrane. The protein operates within protein modification; protein glycosylation. Functionally, subunit of the oligosaccharyl transferase (OST) complex that catalyzes the initial transfer of a defined glycan (Glc(3)Man(9)GlcNAc(2) in eukaryotes) from the lipid carrier dolichol-pyrophosphate to an asparagine residue within an Asn-X-Ser/Thr consensus motif in nascent polypeptide chains, the first step in protein N-glycosylation. N-glycosylation occurs cotranslationally and the complex associates with the Sec61 complex at the channel-forming translocon complex that mediates protein translocation across the endoplasmic reticulum (ER). All subunits are required for a maximal enzyme activity. The protein is Dolichyl-diphosphooligosaccharide--protein glycosyltransferase subunit DAD1 of Bos taurus (Bovine).